A 415-amino-acid chain; its full sequence is Lupus La protein homolog (415 aa).

Residues 7-99 (NEKMTALEAK…RRSPSRPLPE (93 aa)) enclose the HTH La-type RNA-binding domain. Residues Ser92 and Ser94 each carry the phosphoserine modification. In terms of domain architecture, RRM spans 111–187 (RSVYIKGFPT…TNLLILFKED (77 aa)). Lys116 carries the N6-acetyllysine modification. A Phosphothreonine modification is found at Thr120. Lys128, Lys327, and Lys356 each carry N6-acetyllysine. The region spanning 226 to 346 (EGKMGCLLKF…GRFKGSHVFT (121 aa)) is the xRRM domain. A disordered region spans residues 349–415 (RRFKGKGKGN…KKRENGARDK (67 aa)). Residue Thr377 is modified to Phosphothreonine. Over residues 377-415 (TRFDDDDRRRGPMKRGRDGRDREEPASKHKKRENGARDK) the composition is skewed to basic and acidic residues.

As to quaternary structure, interacts with DDX15. May interact with RUFY1. Post-translationally, phosphorylated.

It localises to the nucleus. In terms of biological role, binds to the 3' poly(U) terminus of nascent RNA polymerase III transcripts, protecting them from exonuclease digestion and facilitating their folding and maturation. The sequence is that of Lupus La protein homolog (Ssb) from Mus musculus (Mouse).